Reading from the N-terminus, the 361-residue chain is tRNA-specific 2-thiouridylase MnmA (361 aa).

Residues 6-13 (AMSGGVDS) and Leu-32 each bind ATP. Cys-101 serves as the catalytic Nucleophile. An intrachain disulfide couples Cys-101 to Cys-194. Gly-125 contacts ATP. Residues 144 to 146 (KDQ) are interaction with tRNA. Cys-194 (cysteine persulfide intermediate) is an active-site residue.

The protein belongs to the MnmA/TRMU family.

It is found in the cytoplasm. It catalyses the reaction S-sulfanyl-L-cysteinyl-[protein] + uridine(34) in tRNA + AH2 + ATP = 2-thiouridine(34) in tRNA + L-cysteinyl-[protein] + A + AMP + diphosphate + H(+). In terms of biological role, catalyzes the 2-thiolation of uridine at the wobble position (U34) of tRNA, leading to the formation of s(2)U34. The polypeptide is tRNA-specific 2-thiouridylase MnmA (Corynebacterium aurimucosum (strain ATCC 700975 / DSM 44827 / CIP 107346 / CN-1) (Corynebacterium nigricans)).